We begin with the raw amino-acid sequence, 594 residues long: UvrABC system protein C (594 aa).

A GIY-YIG domain is found at 13 to 99 (NSSGVYQYFD…IKQLKPKYNI (87 aa)). The 36-residue stretch at 205–240 (DRLIKELELKMERLSNNLRFEEALIYRDRIAKIQKI) folds into the UVR domain.

Belongs to the UvrC family. In terms of assembly, interacts with UvrB in an incision complex.

Its subcellular location is the cytoplasm. The UvrABC repair system catalyzes the recognition and processing of DNA lesions. UvrC both incises the 5' and 3' sides of the lesion. The N-terminal half is responsible for the 3' incision and the C-terminal half is responsible for the 5' incision. This Helicobacter pylori (strain ATCC 700392 / 26695) (Campylobacter pylori) protein is UvrABC system protein C.